We begin with the raw amino-acid sequence, 484 residues long: Monocarboxylate transporter 2 (484 aa).

Over 1–16 (MPSETAVPPPHPIPPD) the chain is Cytoplasmic. The helical transmembrane segment at 17-37 (GGWGWVVVGAAFISIGFSYAF) threads the bilayer. Residues 38–60 (PKAVTVFFKDIQQIFQASYSEIA) are Extracellular-facing. The helical transmembrane segment at 61-81 (WISSIMLAVMYAGGPISSVLV) threads the bilayer. Topologically, residues 82–87 (NNYGSR) are cytoplasmic. The chain crosses the membrane as a helical span at residues 88–108 (PVVIIGGLLCCTGMILASFSN). Residues 109 to 116 (SVLELYLT) are Extracellular-facing. The chain crosses the membrane as a helical span at residues 117 to 137 (IGFIGGLGLAFNLQPALTIIG). Residues 138–144 (KYFYRRR) lie on the Cytoplasmic side of the membrane. Residues 145 to 165 (PMANGLAMAGSPVFLSSLAPF) traverse the membrane as a helical segment. At 166-174 (NQYLFNSYG) the chain is on the extracellular side. The helical transmembrane segment at 175–195 (WKGSFLILGGIFLHSCVAGCL) threads the bilayer. At 196-245 (MRPVQTSPRKSKSKSKVGSRQDGSMKKASKVSTAEKINRFLDFSLFKHRG) the chain is on the cytoplasmic side. The interval 201–224 (TSPRKSKSKSKVGSRQDGSMKKAS) is disordered. The helical transmembrane segment at 246-266 (FLIYLSGNVIMFLGFFAPIIF) threads the bilayer. The Extracellular portion of the chain corresponds to 267–282 (LAPYAKDKGVDEYNAA). Residues 283–303 (LLLSVMAFVDMFARPTGGLIA) form a helical membrane-spanning segment. Over 304–311 (NSKLIRPR) the chain is Cytoplasmic. A helical transmembrane segment spans residues 312-332 (IQYFFSFAIVFTGICHLLCPL). Topologically, residues 333–337 (ADTYP) are extracellular. A helical membrane pass occupies residues 338 to 358 (ALVVYSIFFGYGFGSVSSVLF). Topologically, residues 359–372 (ETLMDLVGPARFSS) are cytoplasmic. The chain crosses the membrane as a helical span at residues 373 to 393 (AVGLATIVECCPVLLGPPLAG). Residues 394–405 (KLVDKTKDYKYM) lie on the Extracellular side of the membrane. A helical membrane pass occupies residues 406–426 (YIASGTIVVISGIYLFIGNAI). Over 427–484 (NYRLLAKERKREKARKKKSATHPSRESEALSRSKQDDVSVKVSNPHNSPSDRERESNI) the chain is Cytoplasmic. Positions 437–484 (REKARKKKSATHPSRESEALSRSKQDDVSVKVSNPHNSPSDRERESNI) are disordered. Basic and acidic residues-rich tracts occupy residues 449 to 465 (PSRESEALSRSKQDDVS) and 475 to 484 (PSDRERESNI).

Belongs to the major facilitator superfamily. Monocarboxylate porter (TC 2.A.1.13) family. In terms of assembly, homodimer. Interacts with GRID2IP. Interacts with EMB; interaction mediates SLC16A7 targeting to the plasma membrane. Interacts with isoform 2 of BSG. As to expression, abundant on the surface of hepatocytes. Present on parietal cells of the oxyntic gland of the stomach, on the basolateral surface of epithelial cells in the collecting ducts of the kidney, on sperm tails throughout the epididymis. Expressed in mitochondria-rich skeletal muscle fibers and cardiac myocytes (at protein level).

The protein resides in the cell membrane. Its subcellular location is the basolateral cell membrane. The protein localises to the cytoplasm. It catalyses the reaction pyruvate(out) + H(+)(out) = pyruvate(in) + H(+)(in). The catalysed reaction is 3-methyl-2-oxobutanoate(out) + H(+)(out) = 3-methyl-2-oxobutanoate(in) + H(+)(in). It carries out the reaction (S)-lactate(in) + H(+)(in) = (S)-lactate(out) + H(+)(out). The enzyme catalyses acetoacetate(out) + H(+)(out) = acetoacetate(in) + H(+)(in). It catalyses the reaction (R)-3-hydroxybutanoate(out) + H(+)(out) = (R)-3-hydroxybutanoate(in) + H(+)(in). The catalysed reaction is 4-methyl-2-oxopentanoate(out) + H(+)(out) = 4-methyl-2-oxopentanoate(in) + H(+)(in). It carries out the reaction (S)-3-hydroxybutanoate(out) + H(+)(out) = (S)-3-hydroxybutanoate(in) + H(+)(in). With respect to regulation, transport activity exhibits steep dependence on substrate concentration. Substrate concentration sensitivity of SLC16A7 arises from the strong inter-subunit cooperativity of the SLC16A7 dimer during transport. Inhibited by AR-C155858. Proton-coupled monocarboxylate symporter. Catalyzes the rapid transport across the plasma membrane of monocarboxylates such as L-lactate, pyruvate and ketone bodies, acetoacetate, beta-hydroxybutyrate and acetate. Dimerization is functionally required and both subunits work cooperatively in transporting substrate. This is Monocarboxylate transporter 2 (SLC16A7) from Mesocricetus auratus (Golden hamster).